Here is a 94-residue protein sequence, read N- to C-terminus: Small ribosomal subunit protein bS6 (94 aa).

The protein belongs to the bacterial ribosomal protein bS6 family.

Binds together with bS18 to 16S ribosomal RNA. The protein is Small ribosomal subunit protein bS6 of Clostridium botulinum (strain 657 / Type Ba4).